The primary structure comprises 344 residues: MTAAVDGKGPAAMNTHFPDAETVRTVLTLAVRAPSIHNTQPWRWRVCPTSLELFSRPDMQLRSTDPDGRELILSCGVALHHCVVALASLGWQAKVNRFPDPKDRCHLATIGVQPLVPDQADVALAAAIPRRRTDRRAYSCWPVPGGDIALMAARAARGGVMLRQVSALDRMKAIVAQAVLDHVTDEEYLRELTIWSGRYGSVAGVPARNEPPSDPSAPIPGRLFAGPGLSQPSDVLPADDGAAILALGTETDDRLARLRAGEAASIVLLTATAMGLACCPITEPLEIAKTRDAVRAEVFGAGGYPQMLLRVGWAPINADPLPPTPRRELSQVVEWPEELLRQRC.

FMN-binding positions include 40-44 (QPWRW) and R326.

It belongs to the nitroreductase family. In terms of assembly, interacts with human TLR2. It depends on FMN as a cofactor.

Stimulates pro-inflammatory cytokine expression via TLR2 signaling pathway. Activation of TLR2 results in the phosphorylation and activation of NF-kappa-B. Also induces TLR2 expression. May influence the innate immune responses to facilitate the survival of M.tuberculosis in the granulomatous microenvironment. The chain is Putative NAD(P)H nitroreductase MT3217 from Mycobacterium tuberculosis (strain CDC 1551 / Oshkosh).